Consider the following 1412-residue polypeptide: Erbin (1412 aa).

LRR repeat units lie at residues 23–44, 47–68, 70–91, 93–114, 116–137, 139–161, 162–183, 185–206, 208–229, 231–252, 254–275, 277–298, 300–321, 323–344, 346–367, 369–391, and 392–413; these read TVTTLDYSHCSLEQVPKEIFTF, TLEELYLDANQIEELPKQLFNC, SLHKLSLPDNDLTTLPASIANL, NLRELDVSKNGIQEFPENIKNC, VLTIVEASVNPISKLPDGFSQL, NLTQLYLNDAFLEFLPANFGRLT, KLQILELRENQLKMLPKTMNRL, QLERLDLGSNEFTEVPEVLEQL, GLKEFWMDANRLTFIPGFIGSL, QLTYLDVSKNNIEMVEEGISTC, NLQDLLLSSNSLQQLPETIGSL, NITTLKIDENQLMYLPDSIGGL, SVEELDCSFNEVEALPSSIGQL, NLRTFAADHNYLQQLPPEIGSW, NITVLFLHSNKLETLPEEMGDM, KLKVINLSDNRLKNLPFSFTKLQ, and QLTAMWLSDNQSKPLIPLQKET. Residues serine 440 and serine 444 each carry the phosphoserine modification. 2 disordered regions span residues 464-489 and 506-542; these read CDEDKDEREAPPREGNLKRYPTPYPD and KDEETNEDSGRDLKPHEDQQDINKDVGVKTSESTTTV. Positions 470–480 are enriched in basic and acidic residues; the sequence is EREAPPREGNL. At tyrosine 483 the chain carries Phosphotyrosine. A Phosphothreonine modification is found at threonine 485. Residues 506–532 are compositionally biased toward basic and acidic residues; sequence KDEETNEDSGRDLKPHEDQQDINKDVG. Over residues 533–542 the composition is skewed to low complexity; sequence VKTSESTTTV. Residues serine 569, serine 598, serine 602, serine 603, and serine 620 each carry the phosphoserine modification. The tract at residues 615-681 is disordered; sequence PLIETSINQP…TDSSQDTSLC (67 aa). Positions 632–641 are enriched in basic and acidic residues; the sequence is NKKDDTKETD. Over residues 650 to 662 the composition is skewed to low complexity; it reads NSNQNNSNCSSPS. The segment covering 663–681 has biased composition (polar residues); the sequence is RMSDSVSLNTDSSQDTSLC. Residue serine 715 is modified to Phosphoserine. The segment at 803 to 867 is disordered; the sequence is ETEHLENGNK…PQKSGPVGSV (65 aa). Positions 817 to 835 are enriched in polar residues; it reads ESVNKVNGHSEETSQSPNR. 3 positions are modified to phosphoserine: serine 852, serine 857, and serine 872. At threonine 917 the chain carries Phosphothreonine. At tyrosine 920 the chain carries Phosphotyrosine. Serine 931 carries the post-translational modification Phosphoserine. Tyrosine 972 bears the Phosphotyrosine mark. 2 disordered regions span residues 997–1021 and 1075–1192; these read NPQIDHASFPPQLLPRSESTENQSY and QRQS…KSKV. Over residues 1075–1086 the composition is skewed to polar residues; the sequence is QRQSSVSSTASV. Tyrosine 1104 is subject to Phosphotyrosine. Positions 1157 to 1171 are enriched in polar residues; it reads MSVSDFNYSRTSPSK. A phosphoserine mark is found at serine 1158, serine 1179, and serine 1286. The PDZ domain occupies 1321–1410; sequence EIRVRVEKDP…TVELIIVREV (90 aa).

This sequence belongs to the LAP (LRR and PDZ) protein family. Interacts with ERBB2, BPAG1 and ITGB4. May favor the localization of ERBB2, by restricting its presence to the basolateral membrane of epithelial cells. Also found to interact with ARVCF and delta catenin. Interacts (via C-terminus) with DST Isoform 3 (via N-terminus). Interacts with NOD2 (via CARD domain). Highly expressed in brain, heart, kidney, muscle and stomach, followed by liver, spleen and intestine.

It localises to the cell junction. The protein resides in the hemidesmosome. It is found in the nucleus membrane. The protein localises to the basolateral cell membrane. Its function is as follows. Acts as an adapter for the receptor ERBB2, in epithelia. By binding the unphosphorylated 'Tyr-1248' of receptor ERBB2, it may contribute to stabilize this unphosphorylated state. Inhibits NOD2-dependent NF-kappa-B signaling and pro-inflammatory cytokine secretion. In Homo sapiens (Human), this protein is Erbin.